Here is a 984-residue protein sequence, read N- to C-terminus: Mineralocorticoid receptor (984 aa).

Positions 1-602 are modulating; it reads METKGYHSLP…STGSSRPSKI (602 aa). Residues 231–243 are compositionally biased toward polar residues; the sequence is QGTPLTCSPNVEN. 2 disordered regions span residues 231–329 and 346–369; these read QGTP…AAST and SGTS…EKGA. Residues Ser-250, Ser-259, Ser-283, Ser-287, and Ser-299 each carry the phosphoserine modification. Over residues 259–291 the composition is skewed to low complexity; it reads SPLSSPLSSMKSSISSPPSHCSVKSPVSSPNNV. The segment covering 292-329 has biased composition (polar residues); it reads TLRSSVSSPANINNSRCSVSSPSNTNNRSTLSSPAAST. Over residues 346-355 the composition is skewed to low complexity; it reads SGTSAGSSTS. Zn(2+)-binding residues include Cys-603, Cys-606, Cys-620, Cys-623, Cys-639, Cys-645, Cys-655, and Cys-658. NR C4-type zinc fingers lie at residues 603–623 and 639–663; these read CLVC…CGSC and CAGR…LQKC. A DNA-binding region (nuclear receptor) is located at residues 603-668; it reads CLVCGDEASG…RLQKCLQAGM (66 aa). Positions 669-725 are hinge; the sequence is NLGARKSKKLGKLKGIHEEQPQQQQPPPPPPPPQSPEEGTTYIAPAKEPSVNTALVP. The segment at 684–710 is disordered; the sequence is IHEEQPQQQQPPPPPPPPQSPEEGTTY. Over residues 692–703 the composition is skewed to pro residues; sequence QQPPPPPPPPQS. The NR LBD domain maps to 726–964; that stretch reads QLSTISRALT…EFPAMLVEII (239 aa). Positions 770 and 776 each coordinate 21-hydroxyprogesterone. Aldosterone contacts are provided by Asn-770 and Gln-776. The progesterone site is built by Asn-770 and Gln-776. Residues 782-785 form an important for coactivator binding region; the sequence is KWAK. Positions 817 and 945 each coordinate 21-hydroxyprogesterone. Aldosterone-binding residues include Arg-817 and Thr-945. Progesterone is bound by residues Arg-817 and Thr-945.

Belongs to the nuclear hormone receptor family. NR3 subfamily. In terms of assembly, heteromultimeric cytoplasmic complex with HSP90, HSP70, and FKBP4, in the absence of ligand. After ligand binding, it translocates to the nucleus and binds to DNA as a homodimer and as a heterodimer with NR3C1. Binds the coactivator NCOA2. May interact with HSD11B2 in the absence of ligand. Binds the coactivators NCOA1, TIF1 and NRIP1. Phosphorylated.

The protein resides in the cytoplasm. It localises to the nucleus. It is found in the endoplasmic reticulum membrane. Functionally, receptor for both mineralocorticoids (MC) such as aldosterone and glucocorticoids (GC) such as corticosterone or cortisol. Binds to mineralocorticoid response elements (MRE) and transactivates target genes. The effect of MC is to increase ion and water transport and thus raise extracellular fluid volume and blood pressure and lower potassium levels. This is Mineralocorticoid receptor (NR3C2) from Aotus nancymaae (Ma's night monkey).